A 337-amino-acid polypeptide reads, in one-letter code: Tryptophan--tRNA ligase 2 (337 aa).

Residues glutamine 13–threonine 15 and glycine 22–asparagine 23 contribute to the ATP site. The 'HIGH' region motif lies at proline 14–asparagine 23. Aspartate 139 provides a ligand contact to L-tryptophan. Residues glycine 151–aspartate 153, isoleucine 190, and lysine 199–serine 203 each bind ATP. Positions lysine 199 to serine 203 match the 'KMSKS' region motif.

It belongs to the class-I aminoacyl-tRNA synthetase family. Homodimer.

It localises to the cytoplasm. It carries out the reaction tRNA(Trp) + L-tryptophan + ATP = L-tryptophyl-tRNA(Trp) + AMP + diphosphate + H(+). Catalyzes the attachment of tryptophan to tRNA(Trp). This chain is Tryptophan--tRNA ligase 2, found in Streptomyces avermitilis (strain ATCC 31267 / DSM 46492 / JCM 5070 / NBRC 14893 / NCIMB 12804 / NRRL 8165 / MA-4680).